Here is a 423-residue protein sequence, read N- to C-terminus: Osteomodulin (423 aa).

The first 20 residues, 1–20, serve as a signal peptide directing secretion; that stretch reads MGCLRPIYVLFFCFVVRVYG. Sulfotyrosine is present on residues Tyr-22, Tyr-25, Tyr-31, Tyr-39, Tyr-51, and Tyr-77. The 39-residue stretch at 53-91 folds into the LRRNT domain; it reads APFYQNILGCAKECFCPTNFPTSMYCDNRKLKTIPDIPM. LRR repeat units lie at residues 92–113, 116–129, 142–164, 165–184, 187–207, 213–233, 234–255, 258–279, 281–294, 301–322, and 331–353; these read HIQQ…SFIN, HLKE…KIKS, NLQQ…PKSL, ERLL…AMDG, NVTM…KGKI, KLMQ…GLPL, SLMY…YFQK, KLHA…IFNL, NLIE…KLKQ, NLEH…MMCP, and HLTY…IFFC. 2 N-linked (GlcNAc...) asparagine glycosylation sites follow: Asn-113 and Asn-121. Residue Asn-187 is glycosylated (N-linked (GlcNAc...) asparagine). Asn-242 and Asn-278 each carry an N-linked (GlcNAc...) asparagine glycan. N-linked (GlcNAc...) asparagine glycosylation is present at Asn-316. Cys-321 and Cys-353 are oxidised to a cystine. The tract at residues 383–408 is disordered; the sequence is YQDEEEEEEDDSQDHTLEGQEETEEH. The span at 385 to 394 shows a compositional bias: acidic residues; sequence DEEEEEEDDS. A sulfotyrosine mark is found at Tyr-413 and Tyr-414.

It belongs to the small leucine-rich proteoglycan (SLRP) family. SLRP class II subfamily. As to quaternary structure, binds the alpha(V)beta(3)-integrin. In terms of processing, glycosylated; contains keratan sulfate. In terms of tissue distribution, osteoblast and odontoblast. Expressed in femoral bone and calvaria tissues. Detected in femoral head, rib, tendon and bone marrow.

It is found in the secreted. The protein localises to the extracellular space. Its subcellular location is the extracellular matrix. May be implicated in biomineralization processes. Has a function in binding of osteoblasts via the alpha(V)beta(3)-integrin. In Rattus norvegicus (Rat), this protein is Osteomodulin (Omd).